Consider the following 178-residue polypeptide: Ribonuclease M5 (178 aa).

The Toprim domain occupies 10–94; that stretch reads DGVIVCEGKT…YVDMNARLKN (85 aa). Mg(2+)-binding residues include Glu16, Asp62, and Asp64.

This sequence belongs to the ribonuclease M5 family. It depends on Mg(2+) as a cofactor.

It is found in the cytoplasm. The enzyme catalyses Endonucleolytic cleavage of RNA, removing 21 and 42 nucleotides, respectively, from the 5'- and 3'-termini of a 5S-rRNA precursor.. Required for correct processing of both the 5' and 3' ends of 5S rRNA precursor. Cleaves both sides of a double-stranded region yielding mature 5S rRNA in one step. This is Ribonuclease M5 (rnmV) from Mycoplasma genitalium (strain ATCC 33530 / DSM 19775 / NCTC 10195 / G37) (Mycoplasmoides genitalium).